The following is a 375-amino-acid chain: Succinyl-diaminopimelate desuccinylase (375 aa).

H66 serves as a coordination point for Zn(2+). D68 is an active-site residue. D99 contacts Zn(2+). E133 serves as the catalytic Proton acceptor. Zn(2+)-binding residues include E134, E162, and H348.

It belongs to the peptidase M20A family. DapE subfamily. Homodimer. It depends on Zn(2+) as a cofactor. The cofactor is Co(2+).

It carries out the reaction N-succinyl-(2S,6S)-2,6-diaminopimelate + H2O = (2S,6S)-2,6-diaminopimelate + succinate. It participates in amino-acid biosynthesis; L-lysine biosynthesis via DAP pathway; LL-2,6-diaminopimelate from (S)-tetrahydrodipicolinate (succinylase route): step 3/3. Its function is as follows. Catalyzes the hydrolysis of N-succinyl-L,L-diaminopimelic acid (SDAP), forming succinate and LL-2,6-diaminopimelate (DAP), an intermediate involved in the bacterial biosynthesis of lysine and meso-diaminopimelic acid, an essential component of bacterial cell walls. This is Succinyl-diaminopimelate desuccinylase from Teredinibacter turnerae (strain ATCC 39867 / T7901).